A 275-amino-acid chain; its full sequence is 4-deoxy-L-threo-5-hexosulose-uronate ketol-isomerase (275 aa).

Zn(2+) contacts are provided by H193, H195, E200, and H242.

The protein belongs to the KduI family. Zn(2+) serves as cofactor.

The catalysed reaction is 5-dehydro-4-deoxy-D-glucuronate = 3-deoxy-D-glycero-2,5-hexodiulosonate. The protein operates within glycan metabolism; pectin degradation; 2-dehydro-3-deoxy-D-gluconate from pectin: step 4/5. Catalyzes the isomerization of 5-dehydro-4-deoxy-D-glucuronate to 3-deoxy-D-glycero-2,5-hexodiulosonate. The protein is 4-deoxy-L-threo-5-hexosulose-uronate ketol-isomerase of Bacillus pumilus (strain SAFR-032).